Here is a 378-residue protein sequence, read N- to C-terminus: Cytochrome b (378 aa).

4 helical membrane-spanning segments follow: residues phenylalanine 33 to methionine 53, tryptophan 77 to isoleucine 98, tryptophan 113 to leucine 133, and phenylalanine 178 to leucine 198. Histidine 83 and histidine 97 together coordinate heme b. 2 residues coordinate heme b: histidine 182 and histidine 196. Histidine 201 lines the a ubiquinone pocket. 4 helical membrane-spanning segments follow: residues tyrosine 226–serine 246, leucine 288–histidine 308, tryptophan 320–glycine 340, and leucine 347–proline 367.

Belongs to the cytochrome b family. As to quaternary structure, the cytochrome bc1 complex contains 3 respiratory subunits (MT-CYB, CYC1 and UQCRFS1), 2 core proteins (UQCRC1 and UQCRC2) and probably 6 low-molecular weight proteins. Heme b serves as cofactor.

Its subcellular location is the mitochondrion inner membrane. Its function is as follows. Component of the ubiquinol-cytochrome c reductase complex (complex III or cytochrome b-c1 complex) that is part of the mitochondrial respiratory chain. The b-c1 complex mediates electron transfer from ubiquinol to cytochrome c. Contributes to the generation of a proton gradient across the mitochondrial membrane that is then used for ATP synthesis. This is Cytochrome b (mt-cyb) from Indostomus paradoxus (Armoured stickleback).